A 349-amino-acid polypeptide reads, in one-letter code: 3-dehydroquinate synthase (349 aa).

NAD(+) is bound by residues 63-68, 97-101, 121-122, Lys-134, Lys-143, and 161-164; these read DGEDYK, GVIGD, TT, and FLQT. Residues Glu-176, His-235, and His-252 each coordinate Zn(2+).

This sequence belongs to the sugar phosphate cyclases superfamily. Dehydroquinate synthase family. The cofactor is Co(2+). Requires Zn(2+) as cofactor. NAD(+) is required as a cofactor.

It localises to the cytoplasm. The catalysed reaction is 7-phospho-2-dehydro-3-deoxy-D-arabino-heptonate = 3-dehydroquinate + phosphate. It functions in the pathway metabolic intermediate biosynthesis; chorismate biosynthesis; chorismate from D-erythrose 4-phosphate and phosphoenolpyruvate: step 2/7. Its function is as follows. Catalyzes the conversion of 3-deoxy-D-arabino-heptulosonate 7-phosphate (DAHP) to dehydroquinate (DHQ). The sequence is that of 3-dehydroquinate synthase from Nitratiruptor sp. (strain SB155-2).